A 273-amino-acid polypeptide reads, in one-letter code: Type IV secretion system protein PtlF (273 aa).

Positions 1 to 20 (MMAARMMAAGLAATALSAHA) are cleaved as a signal peptide.

Belongs to the TrbG/VirB9 family. As to quaternary structure, forms a complex with PtlI.

It localises to the cell outer membrane. In terms of biological role, component of the type IV secretion system ptl required for secretion of assembled pertussis toxin (PTX) through the outer membrane. This chain is Type IV secretion system protein PtlF (ptlF), found in Bordetella pertussis (strain Tohama I / ATCC BAA-589 / NCTC 13251).